Reading from the N-terminus, the 84-residue chain is Large ribosomal subunit protein bL27 (84 aa).

The tract at residues 1 to 21 (MAHKKAGGSTRNGRDSNPKYL) is disordered.

This sequence belongs to the bacterial ribosomal protein bL27 family.

The sequence is that of Large ribosomal subunit protein bL27 from Francisella tularensis subsp. holarctica (strain FTNF002-00 / FTA).